The primary structure comprises 416 residues: Adenylosuccinate synthetase (416 aa).

GTP-binding positions include 13–19 and 41–43; these read GDEGKGK and GHT. Catalysis depends on D14, which acts as the Proton acceptor. Mg(2+)-binding residues include D14 and G41. IMP contacts are provided by residues 14–17, 39–42, T126, R140, Q220, T235, and R299; these read DEGK and NAGH. The active-site Proton donor is the H42. 295-301 contacts substrate; the sequence is VSTGRKR. GTP contacts are provided by residues R301, 327-329, and 405-407; these read KLD and STS.

This sequence belongs to the adenylosuccinate synthetase family. As to quaternary structure, homodimer. Requires Mg(2+) as cofactor.

It localises to the cytoplasm. It catalyses the reaction IMP + L-aspartate + GTP = N(6)-(1,2-dicarboxyethyl)-AMP + GDP + phosphate + 2 H(+). It participates in purine metabolism; AMP biosynthesis via de novo pathway; AMP from IMP: step 1/2. In terms of biological role, plays an important role in the de novo pathway of purine nucleotide biosynthesis. Catalyzes the first committed step in the biosynthesis of AMP from IMP. This Campylobacter jejuni subsp. jejuni serotype O:2 (strain ATCC 700819 / NCTC 11168) protein is Adenylosuccinate synthetase.